We begin with the raw amino-acid sequence, 200 residues long: ATP-dependent Clp protease proteolytic subunit 2 (200 aa).

The active-site Nucleophile is S101. Residue H126 is part of the active site.

Belongs to the peptidase S14 family. Fourteen ClpP subunits assemble into 2 heptameric rings which stack back to back to give a disk-like structure with a central cavity, resembling the structure of eukaryotic proteasomes.

The protein resides in the cytoplasm. It catalyses the reaction Hydrolysis of proteins to small peptides in the presence of ATP and magnesium. alpha-casein is the usual test substrate. In the absence of ATP, only oligopeptides shorter than five residues are hydrolyzed (such as succinyl-Leu-Tyr-|-NHMec, and Leu-Tyr-Leu-|-Tyr-Trp, in which cleavage of the -Tyr-|-Leu- and -Tyr-|-Trp bonds also occurs).. Functionally, cleaves peptides in various proteins in a process that requires ATP hydrolysis. Has a chymotrypsin-like activity. Plays a major role in the degradation of misfolded proteins. The protein is ATP-dependent Clp protease proteolytic subunit 2 of Prochlorococcus marinus (strain NATL2A).